Reading from the N-terminus, the 220-residue chain is Iron-sulfur cluster repair protein YtfE (220 aa).

It belongs to the RIC family. YtfE subfamily. Homodimer.

Its subcellular location is the cytoplasm. In terms of biological role, di-iron-containing protein involved in the repair of iron-sulfur clusters damaged by oxidative and nitrosative stress conditions. This is Iron-sulfur cluster repair protein YtfE from Citrobacter koseri (strain ATCC BAA-895 / CDC 4225-83 / SGSC4696).